The chain runs to 1366 residues: DNA-directed RNA polymerase subunit beta' (1366 aa).

Residues 1–23 show a composition bias toward basic residues; it reads MTSSKPKKSSRVRKTSKNSKKNN. Residues 1-25 form a disordered region; the sequence is MTSSKPKKSSRVRKTSKNSKKNNKI. Residues Cys-248, Cys-315, Cys-322, and Cys-325 each coordinate Zn(2+). The tract at residues 1290-1366 is disordered; it reads DYTVDMPQSP…LQEEGLLSDE (77 aa). The span at 1295-1305 shows a compositional bias: polar residues; that stretch reads MPQSPTVSSTA. Over residues 1354–1366 the composition is skewed to low complexity; that stretch reads LEGLQEEGLLSDE.

The protein belongs to the RNA polymerase beta' chain family. RpoC2 subfamily. As to quaternary structure, in cyanobacteria the RNAP catalytic core is composed of 2 alpha, 1 beta, 1 beta', 1 gamma and 1 omega subunit. When a sigma factor is associated with the core the holoenzyme is formed, which can initiate transcription. Zn(2+) is required as a cofactor.

It carries out the reaction RNA(n) + a ribonucleoside 5'-triphosphate = RNA(n+1) + diphosphate. DNA-dependent RNA polymerase catalyzes the transcription of DNA into RNA using the four ribonucleoside triphosphates as substrates. The chain is DNA-directed RNA polymerase subunit beta' from Prochlorococcus marinus (strain MIT 9515).